The primary structure comprises 434 residues: tRNA modification GTPase MnmE (434 aa).

Residues arginine 20, glutamate 79, and valine 119 each contribute to the (6S)-5-formyl-5,6,7,8-tetrahydrofolate site. A TrmE-type G domain is found at 219-361 (GLRVVLAGRP…LQEKLVEIGK (143 aa)). GTP-binding positions include 229–234 (NAGKST), 248–254 (APIAGTT), and 273–276 (DTAG). Serine 233 and threonine 254 together coordinate Mg(2+). Lysine 434 is a binding site for (6S)-5-formyl-5,6,7,8-tetrahydrofolate.

The protein belongs to the TRAFAC class TrmE-Era-EngA-EngB-Septin-like GTPase superfamily. TrmE GTPase family. As to quaternary structure, homodimer. Heterotetramer of two MnmE and two MnmG subunits. It depends on K(+) as a cofactor.

The protein resides in the cytoplasm. Exhibits a very high intrinsic GTPase hydrolysis rate. Involved in the addition of a carboxymethylaminomethyl (cmnm) group at the wobble position (U34) of certain tRNAs, forming tRNA-cmnm(5)s(2)U34. The chain is tRNA modification GTPase MnmE from Zymomonas mobilis subsp. mobilis (strain ATCC 31821 / ZM4 / CP4).